The following is a 209-amino-acid chain: Thymidylate kinase (209 aa).

An ATP-binding site is contributed by 7–14; sequence GVEGSGKS.

It belongs to the thymidylate kinase family.

The catalysed reaction is dTMP + ATP = dTDP + ADP. Functionally, phosphorylation of dTMP to form dTDP in both de novo and salvage pathways of dTTP synthesis. In Solidesulfovibrio magneticus (strain ATCC 700980 / DSM 13731 / RS-1) (Desulfovibrio magneticus), this protein is Thymidylate kinase.